Here is a 463-residue protein sequence, read N- to C-terminus: Phosphomannomutase/phosphoglucomutase (463 aa).

An alpha-D-glucose 1-phosphate-binding site is contributed by Tyr17. Tyr17 is a binding site for alpha-D-mannose 1-phosphate. Ser108 (non-phosphorylated intermediate) is an active-site residue. Positions 108, 242, 244, and 246 each coordinate Mg(2+). Ser108 is modified (phosphoserine). Residues Lys285, His308, 325 to 329 (EMSGH), and 421 to 425 (RASNT) each bind alpha-D-glucose 1-phosphate. Residues His308, 325-329 (EMSGH), and 421-425 (RASNT) each bind alpha-D-mannose 1-phosphate.

It belongs to the phosphohexose mutase family. In terms of assembly, monomer. Mg(2+) is required as a cofactor.

The enzyme catalyses alpha-D-mannose 1-phosphate = D-mannose 6-phosphate. The catalysed reaction is alpha-D-glucose 1-phosphate = alpha-D-glucose 6-phosphate. The protein operates within nucleotide-sugar biosynthesis; GDP-alpha-D-mannose biosynthesis; alpha-D-mannose 1-phosphate from D-fructose 6-phosphate: step 2/2. Its pathway is bacterial outer membrane biogenesis; lipopolysaccharide biosynthesis. Its function is as follows. Highly reversible phosphoryltransferase. The phosphomannomutase activity produces a precursor for alginate polymerization, the alginate layer causes a mucoid phenotype and provides a protective barrier against host immune defenses and antibiotics. Also involved in core lipopolysaccaride (LPS) biosynthesis due to its phosphoglucomutase activity. Essential for rhamnolipid production, an exoproduct correlated with pathogenicity. Required for biofilm production. The reaction proceeds via 2 processive phosphoryl transferase reactions; first from enzyme-phospho-Ser-108 to the substrate (generating a bisphosphorylated substrate intermediate and a dephosphorylated enzyme), a 180 degree rotation of the intermediate (probably aided by movement of domain 4), and subsequent transfer of phosphate back to the enzyme. The chain is Phosphomannomutase/phosphoglucomutase (algC) from Pseudomonas aeruginosa (strain UCBPP-PA14).